A 527-amino-acid chain; its full sequence is Putative GTP-binding protein 6 (527 aa).

A Hflx-type G domain is found at 306–470 (PIISILGYTN…QVETAVMKST (165 aa)). GTP contacts are provided by residues 312–319 (GYTNSGKT), 338–342 (FATLD), 360–363 (DTIG), 429–432 (NKID), and 448–450 (SAL). 2 residues coordinate Mg(2+): Thr319 and Thr340.

This sequence belongs to the TRAFAC class OBG-HflX-like GTPase superfamily. HflX GTPase family. The cofactor is Mg(2+).

This Xenopus laevis (African clawed frog) protein is Putative GTP-binding protein 6 (gtpbp6).